Reading from the N-terminus, the 406-residue chain is Dual-specificity RNA methyltransferase RlmN (406 aa).

Residue glutamate 119 is the Proton acceptor of the active site. In terms of domain architecture, Radical SAM core spans 125–370 (DKGRGTLCVS…AMVRRTRGDD (246 aa)). Cysteines 132 and 375 form a disulfide. Residues cysteine 139, cysteine 143, and cysteine 146 each contribute to the [4Fe-4S] cluster site. S-adenosyl-L-methionine contacts are provided by residues 192 to 193 (GE), serine 224, 246 to 248 (SLH), and asparagine 332. Cysteine 375 (S-methylcysteine intermediate) is an active-site residue.

It belongs to the radical SAM superfamily. RlmN family. It depends on [4Fe-4S] cluster as a cofactor.

Its subcellular location is the cytoplasm. The enzyme catalyses adenosine(2503) in 23S rRNA + 2 reduced [2Fe-2S]-[ferredoxin] + 2 S-adenosyl-L-methionine = 2-methyladenosine(2503) in 23S rRNA + 5'-deoxyadenosine + L-methionine + 2 oxidized [2Fe-2S]-[ferredoxin] + S-adenosyl-L-homocysteine. It catalyses the reaction adenosine(37) in tRNA + 2 reduced [2Fe-2S]-[ferredoxin] + 2 S-adenosyl-L-methionine = 2-methyladenosine(37) in tRNA + 5'-deoxyadenosine + L-methionine + 2 oxidized [2Fe-2S]-[ferredoxin] + S-adenosyl-L-homocysteine. In terms of biological role, specifically methylates position 2 of adenine 2503 in 23S rRNA and position 2 of adenine 37 in tRNAs. m2A2503 modification seems to play a crucial role in the proofreading step occurring at the peptidyl transferase center and thus would serve to optimize ribosomal fidelity. The sequence is that of Dual-specificity RNA methyltransferase RlmN from Xylella fastidiosa (strain Temecula1 / ATCC 700964).